The sequence spans 811 residues: Lysine-specific histone demethylase 1 homolog 3 (811 aa).

A compositionally biased stretch (pro residues) spans 1 to 10 (MSDQPPPYTP). The segment at 1–79 (MSDQPPPYTP…PSAQPPPRAS (79 aa)) is disordered. Residues 44-55 (NKRKRTGFRRKL) are compositionally biased toward basic residues. Low complexity predominate over residues 56–71 (PSGSPAAPVAVAASPS). The region spanning 88–189 (NREPTAEAVT…FGVAPAIKER (102 aa)) is the SWIRM domain. Residues Glu-227, Arg-229, Arg-235, and Glu-609 each coordinate FAD. The interval 790–811 (RNSSRTKTRPSKLKIGIPKSKS) is disordered.

The protein belongs to the flavin monoamine oxidase family. FAD serves as cofactor.

Probable histone demethylase. This chain is Lysine-specific histone demethylase 1 homolog 3, found in Oryza sativa subsp. japonica (Rice).